The sequence spans 275 residues: Putative hydro-lyase SPO1111 (275 aa).

This sequence belongs to the D-glutamate cyclase family.

This Ruegeria pomeroyi (strain ATCC 700808 / DSM 15171 / DSS-3) (Silicibacter pomeroyi) protein is Putative hydro-lyase SPO1111.